The primary structure comprises 255 residues: Probable cyclic nucleotide phosphodiesterase syc0937_d (255 aa).

The Fe cation site is built by Asp19, His21, Asp59, Asn89, His157, His196, and His198. AMP is bound by residues His21, Asp59, and 89 to 90; that span reads NH. His198 is a binding site for AMP.

The protein belongs to the cyclic nucleotide phosphodiesterase class-III family. Fe(2+) serves as cofactor.

This chain is Probable cyclic nucleotide phosphodiesterase syc0937_d, found in Synechococcus sp. (strain ATCC 27144 / PCC 6301 / SAUG 1402/1) (Anacystis nidulans).